An 873-amino-acid polypeptide reads, in one-letter code: DNA mismatch repair protein MutS (873 aa).

625–632 (GPNMGGKS) contacts ATP.

Belongs to the DNA mismatch repair MutS family.

In terms of biological role, this protein is involved in the repair of mismatches in DNA. It is possible that it carries out the mismatch recognition step. This protein has a weak ATPase activity. The protein is DNA mismatch repair protein MutS of Xanthomonas oryzae pv. oryzae (strain KACC10331 / KXO85).